Reading from the N-terminus, the 54-residue chain is uncharacterized protein (54 aa).

Composition is skewed to basic and acidic residues over residues methionine 1–leucine 19 and glutamate 26–lysine 54. Residues methionine 1–lysine 54 are disordered.

This is an uncharacterized protein from Bacillus subtilis (strain 168).